The following is a 1062-amino-acid chain: Suppressor of mar1-1 protein (1062 aa).

Over residues 1–17 (MSENTTAPSDNITNEQR) the composition is skewed to polar residues. Disordered regions lie at residues 1-27 (MSENTTAPSDNITNEQRLPSGPKDDVD), 188-217 (ENSSNNTSSQHNTSSSRRGPGRPRKDASTS), 267-337 (TKQE…KKRT), 370-398 (SSKFHQIPSSPSNPVSQPAPVRTSRSATQ), 595-634 (EISTRSKIKSAEKPTTKGSSMSPKPRSASISGISDHQQEG), and 681-804 (SGEE…GNLG). S2 is modified (N-acetylserine). Residues 189-205 (NSSNNTSSQHNTSSSRR) are compositionally biased toward low complexity. 3 stretches are compositionally biased toward polar residues: residues 267-279 (TKQESLLLSAPSS), 287-298 (SLTSVPQRTNNE), and 305-323 (STANSSSITPTPVTPNNLI). Residues 325–335 (IKRKRGRPPKK) show a composition bias toward basic residues. 2 stretches are compositionally biased toward polar residues: residues 370-385 (SSKFHQIPSSPSNPVS) and 610-629 (TKGSSMSPKPRSASISGISD). A phosphoserine mark is found at S378, S379, S628, and S681. Residues 685 to 699 (AITKENAEYERKTPG) are compositionally biased toward basic and acidic residues. Residue T697 is modified to Phosphothreonine. Residues 704–716 (TTFVPLENSQPSD) are compositionally biased toward polar residues. Residue S712 is modified to Phosphoserine; by ATM or ATR. A Phosphoserine modification is found at S738. A compositionally biased stretch (polar residues) spans 781–793 (KGTSSIHNDTESA). Residue T817 is modified to Phosphothreonine.

In terms of assembly, interacts with RFM1. This interaction is required to recruit HST1.

The protein localises to the nucleus. In terms of biological role, DNA-binding protein that specifically binds the regulatory region of middle sporulation genes (MSE). Required for the repression of middle sporulation genes during vegetative growth. Represses expression via the recruitment of histone deacetylase HST1. The polypeptide is Suppressor of mar1-1 protein (SUM1) (Saccharomyces cerevisiae (strain ATCC 204508 / S288c) (Baker's yeast)).